Here is a 585-residue protein sequence, read N- to C-terminus: Ankyrin repeat protein OPG003 (585 aa).

ANK repeat units follow at residues 66–98 (CGMSPLHCYVMNTRFKPSVLKILLHNGVNNFDN), 172–220 (DGLT…NINA), 224–256 (IGNTPLHTYLQQYTKHSPRVVYALLSRGADTRI), 297–333 (EGHHLLYLFIKHNQGYGSHAFNILRYLLDRFDIQKDE), and 336–365 (NTMTPLHTAFQNCNNNVASYLVYIGYDINL). The tract at residues 554 to 571 (LPPEIIRNIITKLSDYHL) is PRANC/F-box-like.

It belongs to the orthopoxvirus OPG003 family.

May be involved in virus-host protein interaction through the ankyrin repeats and PRANC regions. This chain is Ankyrin repeat protein OPG003 (OPG003), found in Homo sapiens (Human).